The primary structure comprises 457 residues: Adenylosuccinate synthetase (457 aa).

GTP is bound by residues 45–51 and 73–75; these read GDEGKGK and GHT. Asp-46 acts as the Proton acceptor in catalysis. Positions 46 and 73 each coordinate Mg(2+). IMP contacts are provided by residues 46 to 49, 71 to 74, Thr-163, Arg-177, Asn-255, Thr-270, and Arg-334; these read DEGK and NAGH. His-74 (proton donor) is an active-site residue. Residue 330-336 participates in substrate binding; that stretch reads VTTKRVR. Residues Arg-336, 362 to 364, and 444 to 446 contribute to the GTP site; these read KLD and GVG.

Belongs to the adenylosuccinate synthetase family. In terms of assembly, homodimer. It depends on Mg(2+) as a cofactor.

It localises to the cytoplasm. The catalysed reaction is IMP + L-aspartate + GTP = N(6)-(1,2-dicarboxyethyl)-AMP + GDP + phosphate + 2 H(+). The protein operates within purine metabolism; AMP biosynthesis via de novo pathway; AMP from IMP: step 1/2. Functionally, plays an important role in the de novo pathway and in the salvage pathway of purine nucleotide biosynthesis. Catalyzes the first committed step in the biosynthesis of AMP from IMP. This chain is Adenylosuccinate synthetase, found in Aedes aegypti (Yellowfever mosquito).